We begin with the raw amino-acid sequence, 356 residues long: Tyrosine recombinase XerS (356 aa).

The region spanning 16-121 (IMPWFVLDYY…ALSSLYKYLT (106 aa)) is the Core-binding (CB) domain. The 186-residue stretch at 169–354 (EFLDYVDCEY…VNDEQKNALD (186 aa)) folds into the Tyr recombinase domain. Active-site residues include Arg210, Lys234, His306, Arg309, and His332. Tyr341 functions as the O-(3'-phospho-DNA)-tyrosine intermediate in the catalytic mechanism.

It belongs to the 'phage' integrase family. XerS subfamily.

It is found in the cytoplasm. Its activity is regulated as follows. FtsK is required for recombination. Its function is as follows. Site-specific tyrosine recombinase, which acts by catalyzing the cutting and rejoining of the recombining DNA molecules. Essential to convert dimers of the bacterial chromosome into monomers to permit their segregation at cell division. The protein is Tyrosine recombinase XerS of Streptococcus uberis (strain ATCC BAA-854 / 0140J).